Consider the following 37-residue polypeptide: Large ribosomal subunit protein bL36 (37 aa).

The protein belongs to the bacterial ribosomal protein bL36 family.

This Rippkaea orientalis (strain PCC 8801 / RF-1) (Cyanothece sp. (strain PCC 8801)) protein is Large ribosomal subunit protein bL36.